A 305-amino-acid polypeptide reads, in one-letter code: Ribosomal RNA small subunit methyltransferase H (305 aa).

Residues 30 to 32 (GGH), aspartate 49, phenylalanine 74, aspartate 96, and glutamine 103 contribute to the S-adenosyl-L-methionine site.

It belongs to the methyltransferase superfamily. RsmH family.

The protein localises to the cytoplasm. The catalysed reaction is cytidine(1402) in 16S rRNA + S-adenosyl-L-methionine = N(4)-methylcytidine(1402) in 16S rRNA + S-adenosyl-L-homocysteine + H(+). Functionally, specifically methylates the N4 position of cytidine in position 1402 (C1402) of 16S rRNA. The protein is Ribosomal RNA small subunit methyltransferase H of Francisella tularensis subsp. holarctica (strain LVS).